The chain runs to 387 residues: UDP-N-acetylglucosamine--N-acetylmuramyl-(pentapeptide) pyrophosphoryl-undecaprenol N-acetylglucosamine transferase (387 aa).

The segment at 1–22 is disordered; the sequence is MSEHVRSAGPPQASTAPSGGSA. Residues 41-43, Asn-158, Arg-194, Ser-222, Ile-276, and Gln-321 contribute to the UDP-N-acetyl-alpha-D-glucosamine site; that span reads TGG.

The protein belongs to the glycosyltransferase 28 family. MurG subfamily.

The protein localises to the cell inner membrane. The enzyme catalyses di-trans,octa-cis-undecaprenyl diphospho-N-acetyl-alpha-D-muramoyl-L-alanyl-D-glutamyl-meso-2,6-diaminopimeloyl-D-alanyl-D-alanine + UDP-N-acetyl-alpha-D-glucosamine = di-trans,octa-cis-undecaprenyl diphospho-[N-acetyl-alpha-D-glucosaminyl-(1-&gt;4)]-N-acetyl-alpha-D-muramoyl-L-alanyl-D-glutamyl-meso-2,6-diaminopimeloyl-D-alanyl-D-alanine + UDP + H(+). It functions in the pathway cell wall biogenesis; peptidoglycan biosynthesis. In terms of biological role, cell wall formation. Catalyzes the transfer of a GlcNAc subunit on undecaprenyl-pyrophosphoryl-MurNAc-pentapeptide (lipid intermediate I) to form undecaprenyl-pyrophosphoryl-MurNAc-(pentapeptide)GlcNAc (lipid intermediate II). This chain is UDP-N-acetylglucosamine--N-acetylmuramyl-(pentapeptide) pyrophosphoryl-undecaprenol N-acetylglucosamine transferase, found in Polaromonas sp. (strain JS666 / ATCC BAA-500).